The sequence spans 277 residues: MALKHFKPVTPGLRQLVIVDRSGLYKGKPVKTLTEGKSSSGGRNNNGRITVRFRGGGHKQTYRLVDFKRAKRDVSATVERLEYDPNRTAFIALIKYEDGELAYILAPQRLAVGDKVIAGEQVDVKPGNAAPLSNLPVGTIVHNVEMKIGKGGQIARSAGSYAQIVGRDQGYVIVRLNSGEQRLIHGACYATVGAVSNPDHMNTSLGKAGRSRWLGVKPHNRGVTMNPVDHPHGGGEGRTSGGRHPVTPWGKPTKGMKTRSNKATDKFIVTSRHKRKK.

A disordered region spans residues 223-277 (VTMNPVDHPHGGGEGRTSGGRHPVTPWGKPTKGMKTRSNKATDKFIVTSRHKRKK).

It belongs to the universal ribosomal protein uL2 family. In terms of assembly, part of the 50S ribosomal subunit. Forms a bridge to the 30S subunit in the 70S ribosome.

One of the primary rRNA binding proteins. Required for association of the 30S and 50S subunits to form the 70S ribosome, for tRNA binding and peptide bond formation. It has been suggested to have peptidyltransferase activity; this is somewhat controversial. Makes several contacts with the 16S rRNA in the 70S ribosome. The polypeptide is Large ribosomal subunit protein uL2 (Azorhizobium caulinodans (strain ATCC 43989 / DSM 5975 / JCM 20966 / LMG 6465 / NBRC 14845 / NCIMB 13405 / ORS 571)).